Reading from the N-terminus, the 957-residue chain is Receptor-like protein 53 (957 aa).

Residues 1 to 30 form the signal peptide; the sequence is MEGFWNSKSIIRITLSFIFLFICHFLDVLA. Over 31–910 the chain is Extracellular; sequence APTRNLCRPE…EEEDEDLISW (880 aa). N78, N114, N143, N167, and N191 each carry an N-linked (GlcNAc...) asparagine glycan. 12 LRR repeats span residues 120–143, 144–170, 172–192, 193–216, 217–240, 241–266, 268–287, 288–312, 313–336, 338–360, 361–384, and 386–409; these read LHFL…SIEN, LSHL…NLSR, TYLN…ICNL, SHLT…IGGL, SHLT…IGNL, SNLT…NLSQ, TFLG…SFGN, LNQL…LLNL, TGLS…ITSL, NLMD…LFTI, PSLT…NISS, and SNLY…ISKL. 4 N-linked (GlcNAc...) asparagine glycosylation sites follow: N239, N242, N252, and N263. 2 N-linked (GlcNAc...) asparagine glycosylation sites follow: N311 and N332. N-linked (GlcNAc...) asparagine glycosylation occurs at N381. An LRR 13; degenerate repeat occupies 412-433; sequence LFRLDISHLNTQGPVDFSIFSH. 16 LRR repeats span residues 434 to 458, 460 to 483, 486 to 509, 510 to 533, 535 to 556, 558 to 580, 581 to 604, 605 to 629, 631 to 651, 652 to 674, 675 to 697, 698 to 721, 765 to 789, 790 to 813, 814 to 837, and 839 to 862; these read LKSL…YFLS, FKRL…SVSD, SQLI…VRTQ, HELG…LWRL, ILYY…SKPE, SLLY…ICGL, RSLN…MGHL, KSTL…IFEI, RSLD…LSFF, STLE…WLSS, LPKL…EATF, PELR…YFVK, LTIY…IGLL, KELL…MGNL, TALE…LGDL, and FLAY…QFLT. N-linked (GlcNAc...) asparagine glycosylation is found at N441, N446, and N477. Residues N540 and N543 are each glycosylated (N-linked (GlcNAc...) asparagine). An N-linked (GlcNAc...) asparagine glycan is attached at N594. N-linked (GlcNAc...) asparagine glycosylation occurs at N665. The N-linked (GlcNAc...) asparagine glycan is linked to N711. A glycan (N-linked (GlcNAc...) asparagine) is linked at N812. N-linked (GlcNAc...) asparagine glycans are attached at residues N844 and N864. The chain crosses the membrane as a helical span at residues 911–931; the sequence is IAAAIGFGPGIAFGLMFGYIL. Residues 932–957 are Cytoplasmic-facing; sequence VSYKPEWFMNPFDRNNRRQKRHKTTH.

It belongs to the RLP family.

The protein localises to the cell membrane. This Arabidopsis thaliana (Mouse-ear cress) protein is Receptor-like protein 53.